The following is a 342-amino-acid chain: Antihemorrhagic factor HSF (342 aa).

A signal peptide spans 1–19 (MNSLVALVLLGQIIGSTLS). 2 consecutive Cystatin fetuin-A-type domains span residues 22–130 (VRGD…VKCH) and 141–254 (RNCS…SNCV). The Cell attachment site signature appears at 23 to 25 (RGD). The indispensable for metalloproteinase inhibition stretch occupies residues 24-108 (GDLECDDKEA…RQQHNHAVEM (85 aa)). Disulfide bonds link Cys-28-Cys-332, Cys-85-Cys-96, Cys-110-Cys-129, Cys-143-Cys-146, Cys-205-Cys-217, and Cys-230-Cys-253. The N-linked (GlcNAc...) asparagine glycan is linked to Asn-142. An N-linked (GlcNAc...) asparagine glycan is attached at Asn-204. Asn-282 carries N-linked (GlcNAc...) asparagine glycosylation.

It belongs to the fetuin family. Cys-63 may exist in a mixed disulfide form with a thiol compound such as glutathione. As to expression, expressed by the liver.

It localises to the secreted. Functionally, inhibits hemorrhagic and proteolytic activities of metalloproteinases (HR1A, HR1B, HR2a, HR2b and H2 proteinase from T.flavodidis and brevilysins H3, H4, H6 and L4 from A.halys brevicaudus). Has no effect on brevilysins H2. Has no effect on papain and cathepsin-B. This chain is Antihemorrhagic factor HSF, found in Protobothrops flavoviridis (Habu).